A 109-amino-acid polypeptide reads, in one-letter code: uncharacterized protein (109 aa).

It localises to the mitochondrion. This is an uncharacterized protein from Arabidopsis thaliana (Mouse-ear cress).